Here is a 341-residue protein sequence, read N- to C-terminus: MSNLPPDEKVILFDKSKHVQYIVEQESHRSFEYWLSEHLRMNGLYWGVTALITMNELSALAQQDVIDYIMLCWDDKTGAFGSFPKHDGHILSTLSALQVLKIYDQELTVLNDNNESSNGNKRERLIKFITGLQLPDGSFQGDKYGEVDTRFVYTAVSSLSLLNALTDSIADTASAFIMQCFNFDGGFGLIPGSESHAAQVFTCVGALAIMNKLDLLDVENKKVKLIDWLTERQVLPSGGFNGRPEKLPDVCYSWWVLSSLSILKRKNWVDLKILENFILTCQDLENGGFSDRPGNQTDVYHTCFAIAGLSLIDYKKYGFKEIDPVYCMPVEVTSKFVRRSA.

PFTB repeat units follow at residues 15 to 55 (KSKH…ITMN), 62 to 104 (QQDV…KIYD), 122 to 163 (RERL…SLLN), 170 to 211 (ADTA…AIMN), 223 to 264 (VKLI…SILK), and 271 to 313 (LKIL…SLID). Geranylgeranyl diphosphate-binding positions include 196-198 (HAA) and 243-255 (RPEK…YSWW). 3 residues coordinate Zn(2+): D249, C251, and H301.

It belongs to the protein prenyltransferase subunit beta family. As to quaternary structure, heterodimer of an alpha and a beta subunit. Zn(2+) is required as a cofactor.

The enzyme catalyses geranylgeranyl diphosphate + L-cysteinyl-[protein] = S-geranylgeranyl-L-cysteinyl-[protein] + diphosphate. Its function is as follows. Catalyzes the transfer of a geranyl-geranyl moiety from geranyl-geranyl pyrophosphate to proteins having the C-terminal -XCC or -XCXC, where both cysteines may become modified. Acts on YPT1 and SEC4. The chain is Geranylgeranyl transferase type-2 subunit beta (BET2) from Candida albicans (Yeast).